We begin with the raw amino-acid sequence, 141 residues long: Large ribosomal subunit protein uL11c (141 aa).

Belongs to the universal ribosomal protein uL11 family. As to quaternary structure, part of the ribosomal stalk of the 50S ribosomal subunit. Interacts with L10 and the large rRNA to form the base of the stalk. L10 forms an elongated spine to which L12 dimers bind in a sequential fashion forming a multimeric L10(L12)X complex.

It is found in the plastid. It localises to the chloroplast. Forms part of the ribosomal stalk which helps the ribosome interact with GTP-bound translation factors. The chain is Large ribosomal subunit protein uL11c from Guillardia theta (Cryptophyte).